A 346-amino-acid chain; its full sequence is Phosphate acyltransferase (346 aa).

This sequence belongs to the PlsX family. Homodimer. Probably interacts with PlsY.

Its subcellular location is the cytoplasm. It catalyses the reaction a fatty acyl-[ACP] + phosphate = an acyl phosphate + holo-[ACP]. Its pathway is lipid metabolism; phospholipid metabolism. Catalyzes the reversible formation of acyl-phosphate (acyl-PO(4)) from acyl-[acyl-carrier-protein] (acyl-ACP). This enzyme utilizes acyl-ACP as fatty acyl donor, but not acyl-CoA. The chain is Phosphate acyltransferase from Brucella suis biovar 1 (strain 1330).